We begin with the raw amino-acid sequence, 486 residues long: Cysteine--tRNA ligase (486 aa).

A Zn(2+)-binding site is contributed by Cys-29. Positions 31 to 41 match the 'HIGH' region motif; sequence VTVYDYCHLGH. Residues Cys-217, His-242, and Glu-246 each coordinate Zn(2+). The short motif at 274 to 278 is the 'KMSKS' region element; that stretch reads KMSKS. Lys-277 lines the ATP pocket.

Belongs to the class-I aminoacyl-tRNA synthetase family. As to quaternary structure, monomer. The cofactor is Zn(2+).

The protein localises to the cytoplasm. It carries out the reaction tRNA(Cys) + L-cysteine + ATP = L-cysteinyl-tRNA(Cys) + AMP + diphosphate. This Thermosynechococcus vestitus (strain NIES-2133 / IAM M-273 / BP-1) protein is Cysteine--tRNA ligase.